The chain runs to 1054 residues: Acid trehalase (1054 aa).

Positions 1-21 are cleaved as a signal peptide; it reads MRFKSVFTLLPLLAQLPSGGA. Asn47, Asn135, Asn176, Asn283, and Asn307 each carry an N-linked (GlcNAc...) asparagine glycan. 448–449 contacts substrate; sequence WD. N-linked (GlcNAc...) asparagine glycosylation is found at Asn493, Asn513, Asn570, and Asn578. Glu584 acts as the Proton donor in catalysis. N-linked (GlcNAc...) asparagine glycans are attached at residues Asn618 and Asn644. Position 650-651 (650-651) interacts with substrate; it reads KQ. Residues Asn665, Asn734, Asn803, Asn826, Asn838, Asn903, Asn937, Asn966, and Asn992 are each glycosylated (N-linked (GlcNAc...) asparagine).

This sequence belongs to the glycosyl hydrolase 65 family.

It catalyses the reaction alpha,alpha-trehalose + H2O = alpha-D-glucose + beta-D-glucose. The sequence is that of Acid trehalase (treA) from Emericella nidulans (strain FGSC A4 / ATCC 38163 / CBS 112.46 / NRRL 194 / M139) (Aspergillus nidulans).